The primary structure comprises 469 residues: Tetratricopeptide repeat protein 38 (469 aa).

An N-acetylalanine modification is found at alanine 2. Serine 5 carries the post-translational modification Phosphoserine. TPR repeat units lie at residues 108 to 141, 180 to 213, and 252 to 285; these read REQLHVSAVETFAKGNFPKACELWEQILQDHPTD, SYVKGIYSFGLMETNFYDQAEKLAKEALSINPTD, and CHNYWHWALYLIEKGEYEAALTIYDTHILPSLQA.

It belongs to the TTC38 family.

The chain is Tetratricopeptide repeat protein 38 (TTC38) from Pongo abelii (Sumatran orangutan).